We begin with the raw amino-acid sequence, 150 residues long: MPPKKAARPAQENISLGPQIREGELVFGVARIFASFNDTFVHVTDLSGRETTDRVIGGIKVKADRDESSPYAAMLAAQDVAARCKELGITALHIKIRATGGNGTRTPGPGAQSALRALARSGMKIGRIEDVTPTPSDSTRRKGGRRGRRL.

Residues 126 to 150 form a disordered region; the sequence is GRIEDVTPTPSDSTRRKGGRRGRRL. A compositionally biased stretch (basic residues) spans 141-150; it reads RKGGRRGRRL.

The protein belongs to the universal ribosomal protein uS11 family. In terms of assembly, component of the small ribosomal subunit (SSU). Mature N.crassa ribosomes consist of a small (40S) and a large (60S) subunit. The 40S small subunit contains 1 molecule of ribosomal RNA (18S rRNA) and at least 32 different proteins. The large 60S subunit contains 3 rRNA molecules (26S, 5.8S and 5S rRNA) and at least 42 different proteins.

The protein localises to the cytoplasm. Component of the ribosome, a large ribonucleoprotein complex responsible for the synthesis of proteins in the cell. The small ribosomal subunit (SSU) binds messenger RNAs (mRNAs) and translates the encoded message by selecting cognate aminoacyl-transfer RNA (tRNA) molecules. The large subunit (LSU) contains the ribosomal catalytic site termed the peptidyl transferase center (PTC), which catalyzes the formation of peptide bonds, thereby polymerizing the amino acids delivered by tRNAs into a polypeptide chain. The nascent polypeptides leave the ribosome through a tunnel in the LSU and interact with protein factors that function in enzymatic processing, targeting, and the membrane insertion of nascent chains at the exit of the ribosomal tunnel. uS11 is involved in nucleolar processing of pre-18S ribosomal RNA and ribosome assembly. The polypeptide is Small ribosomal subunit protein uS11 (rps-14) (Neurospora crassa (strain ATCC 24698 / 74-OR23-1A / CBS 708.71 / DSM 1257 / FGSC 987)).